The chain runs to 773 residues: ATP-dependent zinc metalloprotease YME1L1 (773 aa).

Residues M1–L295 lie on the Mitochondrial matrix side of the membrane. Residues I296–V316 form a helical membrane-spanning segment. Residues R317–R773 lie on the Mitochondrial intermembrane side of the membrane. ATP contacts are provided by V341, T383, G384, K385, T386, and L387. H599 contacts Zn(2+). E600 is a catalytic residue. H603 and D677 together coordinate Zn(2+).

The protein in the N-terminal section; belongs to the AAA ATPase family. This sequence in the C-terminal section; belongs to the peptidase M41 family. Homohexamer; may also form heterohexamers. Exists in several complexes of 600-1100 kDa. Interacts with AFG1L. The cofactor is Zn(2+). Post-translationally, proteolytically processed by mitochondrial processing peptidase (MPP) to generate the mature form. Degraded in an OMA1-dependent manner in response to oxidative stress. As to expression, high expression in cardiac and skeletal muscle mitochondria.

It localises to the mitochondrion inner membrane. Its subcellular location is the mitochondrion. It catalyses the reaction ATP + H2O = ADP + phosphate + H(+). Functionally, ATP-dependent metalloprotease that catalyzes the degradation of folded and unfolded proteins with a suitable degron sequence in the mitochondrial intermembrane region. Plays an important role in regulating mitochondrial morphology and function by cleaving OPA1 at position S2, giving rise to a form of OPA1 that promotes maintenance of normal mitochondrial structure and mitochondrial protein metabolism. Ensures cell proliferation, maintains normal cristae morphology and complex I respiration activity, promotes antiapoptotic activity and protects mitochondria from the accumulation of oxidatively damaged membrane proteins. Required to control the accumulation of nonassembled respiratory chain subunits (NDUFB6, OX4 and ND1). Involved in the mitochondrial adaptation in response to various signals, such as stress or developmental cues, by mediating degradation of mitochondrial proteins to rewire the mitochondrial proteome. Catalyzes degradation of mitochondrial proteins, such as translocases, lipid transfer proteins and metabolic enzymes in response to nutrient starvation in order to limit mitochondrial biogenesis: mechanistically, YME1L is activated by decreased phosphatidylethanolamine levels caused by LPIN1 activity in response to mTORC1 inhibition. Acts as a regulator of adult neural stem cell self-renewal by promoting mitochondrial proteome rewiring, preserving neural stem and progenitor cells self-renewal. Required for normal, constitutive degradation of PRELID1. Catalyzes the degradation of OMA1 in response to membrane depolarization. Mediates degradation of TIMM17A downstream of the integrated stress response (ISR). Catalyzes degradation of MICU1 when MICU1 is not assembled via an interchain disulfide. The polypeptide is ATP-dependent zinc metalloprotease YME1L1 (YME1L1) (Homo sapiens (Human)).